Consider the following 446-residue polypeptide: 3-phosphoshikimate 1-carboxyvinyltransferase (446 aa).

The segment at M1–P20 is disordered. Residues K23, S24, and R28 each coordinate 3-phosphoshikimate. K23 serves as a coordination point for phosphoenolpyruvate. Phosphoenolpyruvate-binding residues include G100 and R128. Positions 171, 172, 173, 200, 315, and 344 each coordinate 3-phosphoshikimate. Residue Q173 coordinates phosphoenolpyruvate. The Proton acceptor role is filled by E315. 3 residues coordinate phosphoenolpyruvate: R348, R389, and K414.

Belongs to the EPSP synthase family. Monomer.

It is found in the cytoplasm. It catalyses the reaction 3-phosphoshikimate + phosphoenolpyruvate = 5-O-(1-carboxyvinyl)-3-phosphoshikimate + phosphate. Its pathway is metabolic intermediate biosynthesis; chorismate biosynthesis; chorismate from D-erythrose 4-phosphate and phosphoenolpyruvate: step 6/7. Catalyzes the transfer of the enolpyruvyl moiety of phosphoenolpyruvate (PEP) to the 5-hydroxyl of shikimate-3-phosphate (S3P) to produce enolpyruvyl shikimate-3-phosphate and inorganic phosphate. This chain is 3-phosphoshikimate 1-carboxyvinyltransferase, found in Mycolicibacterium vanbaalenii (strain DSM 7251 / JCM 13017 / BCRC 16820 / KCTC 9966 / NRRL B-24157 / PYR-1) (Mycobacterium vanbaalenii).